The chain runs to 358 residues: B3 domain-containing protein Os12g0592300 (358 aa).

A DNA-binding region (TF-B3 1) is located at residues 25–122 (RIRFFRLMTG…SFDVLIFDAS (98 aa)). A disordered region spans residues 148–215 (YHLSDSEDTS…EKSDDDDEHA (68 aa)). Positions 156–181 (TSTPSTFLVGSPHKASTSKKLNGKTK) are enriched in polar residues. A compositionally biased stretch (acidic residues) spans 203–215 (IEEEKSDDDDEHA). The TF-B3 2 DNA-binding region spans 252-350 (FVTVLQAPQI…TMTVHVIGKV (99 aa)).

It localises to the nucleus. The protein is B3 domain-containing protein Os12g0592300 of Oryza sativa subsp. japonica (Rice).